We begin with the raw amino-acid sequence, 170 residues long: 3-hydroxydecanoyl-[acyl-carrier-protein] dehydratase (170 aa).

Residue His71 is part of the active site.

This sequence belongs to the thioester dehydratase family. FabA subfamily. As to quaternary structure, homodimer.

It localises to the cytoplasm. The catalysed reaction is a (3R)-hydroxyacyl-[ACP] = a (2E)-enoyl-[ACP] + H2O. The enzyme catalyses (3R)-hydroxydecanoyl-[ACP] = (2E)-decenoyl-[ACP] + H2O. It catalyses the reaction (2E)-decenoyl-[ACP] = (3Z)-decenoyl-[ACP]. The protein operates within lipid metabolism; fatty acid biosynthesis. In terms of biological role, necessary for the introduction of cis unsaturation into fatty acids. Catalyzes the dehydration of (3R)-3-hydroxydecanoyl-ACP to E-(2)-decenoyl-ACP and then its isomerization to Z-(3)-decenoyl-ACP. Can catalyze the dehydratase reaction for beta-hydroxyacyl-ACPs with saturated chain lengths up to 16:0, being most active on intermediate chain length. This is 3-hydroxydecanoyl-[acyl-carrier-protein] dehydratase from Chelativorans sp. (strain BNC1).